The following is a 91-amino-acid chain: Small ribosomal subunit protein bS18 (91 aa).

Belongs to the bacterial ribosomal protein bS18 family. As to quaternary structure, part of the 30S ribosomal subunit. Forms a tight heterodimer with protein bS6.

In terms of biological role, binds as a heterodimer with protein bS6 to the central domain of the 16S rRNA, where it helps stabilize the platform of the 30S subunit. This is Small ribosomal subunit protein bS18 from Burkholderia multivorans (strain ATCC 17616 / 249).